The chain runs to 430 residues: Asparagine--tRNA ligase (430 aa).

Belongs to the class-II aminoacyl-tRNA synthetase family. Homodimer.

The protein localises to the cytoplasm. The enzyme catalyses tRNA(Asn) + L-asparagine + ATP = L-asparaginyl-tRNA(Asn) + AMP + diphosphate + H(+). This chain is Asparagine--tRNA ligase, found in Staphylococcus aureus (strain USA300).